The following is a 332-amino-acid chain: Glucokinase (332 aa).

Residue alanine 15 to threonine 20 participates in ATP binding.

This sequence belongs to the bacterial glucokinase family.

The protein resides in the cytoplasm. The enzyme catalyses D-glucose + ATP = D-glucose 6-phosphate + ADP + H(+). The polypeptide is Glucokinase (Campylobacter jejuni subsp. doylei (strain ATCC BAA-1458 / RM4099 / 269.97)).